A 522-amino-acid polypeptide reads, in one-letter code: MDATELGVSGEGEEIDMEVMRPLIESEDRFEGTYGEKKHLQRYLNSDNKKDEEVMKPLIENEDDSDGTCDEHQYLQRHPDLDNKDGLTFFQTLIHLLKGNIGTGLLGLPLAMKNAGVLLGPISLLFFGIISIHCMNILVRCSHFLCQRYKKANLGYSDTVGLALEVGPGVLQRHASFGRNLVDWFLVVTQLGFCSVYFVFLAENIKQVFEVFLETKLQQSEIGIWSLDLRIYMFSFLPLIIPLVFIRDLKNLSLLSFFANVSMAISLLIVYQYVIRNLSDPRTLPLGTSWKTYPLFFGTAIFAFEGIGVVLPLENRMRDKKDFSKALNIGMAIVTTLYISLATLGYFCFGDQIKGSITLNLPQDSWLYQLVKILYSFGIYVTYAIQYYVPAEIILPAVTSRVQKTRKLLCEFTMRFFLVCLTCAVAVLIPRLDLVISFVGAVSSSTLALILPPLVEIITYHKENLSPWVIMKDVGIAVIGFVGFIAGTYVTIEEMIYPISYVPPNVSHSDFGVLNNTVLEGH.

The next 10 helical transmembrane spans lie at 115–135 (AGVL…IHCM), 181–201 (LVDW…FVFL), 226–246 (SLDL…LVFI), 255–275 (LSFF…QYVI), 293–313 (YPLF…VLPL), 329–349 (IGMA…YFCF), 377–397 (FGIY…ILPA), 409–429 (LCEF…AVLI), 435–455 (VISF…PPLV), and 467–487 (PWVI…FIAG). The N-linked (GlcNAc...) asparagine glycan is linked to Asn515.

Belongs to the amino acid/polyamine transporter 2 family.

Its subcellular location is the lysosome membrane. The enzyme catalyses L-tryptophan(in) = L-tryptophan(out). It catalyses the reaction L-alanine(in) = L-alanine(out). The catalysed reaction is L-proline(in) = L-proline(out). Functionally, uniporter that mediates the transport of neutral amino acids like L-tryptophan, proline and alanine. The transport activity is sodium ions-independent, electroneutral and therefore functions via facilitated diffusion. This is Neutral amino acid uniporter 4 from Xenopus laevis (African clawed frog).